Here is a 127-residue protein sequence, read N- to C-terminus: Fumarate reductase subunit C (127 aa).

3 helical membrane-spanning segments follow: residues 30–50, 58–78, and 107–127; these read ATVLPLILFTLFLTFGLGSLV, GWLSFMANPIVVGINIVALLG, and IIVLTQWAAVAFISLIVLMVV.

The protein belongs to the FrdC family. As to quaternary structure, part of an enzyme complex containing four subunits: a flavoprotein (FrdA), an iron-sulfur protein (FrdB), and two hydrophobic anchor proteins (FrdC and FrdD).

The protein resides in the cell inner membrane. Its function is as follows. Anchors the catalytic components of the fumarate reductase complex to the cell membrane, binds quinones. The polypeptide is Fumarate reductase subunit C (Vibrio atlanticus (strain LGP32) (Vibrio splendidus (strain Mel32))).